Consider the following 70-residue polypeptide: ATP synthase subunit c (70 aa).

A run of 2 helical transmembrane segments spans residues 4–24 (IAAGIAMFGAAIGGGIGDGIV) and 47–67 (FIGVGLVEAMPILAFVISLLV).

This sequence belongs to the ATPase C chain family. In terms of assembly, F-type ATPases have 2 components, F(1) - the catalytic core - and F(0) - the membrane proton channel. F(1) has five subunits: alpha(3), beta(3), gamma(1), delta(1), epsilon(1). F(0) has three main subunits: a(1), b(2) and c(10-14). The alpha and beta chains form an alternating ring which encloses part of the gamma chain. F(1) is attached to F(0) by a central stalk formed by the gamma and epsilon chains, while a peripheral stalk is formed by the delta and b chains.

The protein resides in the cell membrane. Its function is as follows. F(1)F(0) ATP synthase produces ATP from ADP in the presence of a proton or sodium gradient. F-type ATPases consist of two structural domains, F(1) containing the extramembraneous catalytic core and F(0) containing the membrane proton channel, linked together by a central stalk and a peripheral stalk. During catalysis, ATP synthesis in the catalytic domain of F(1) is coupled via a rotary mechanism of the central stalk subunits to proton translocation. In terms of biological role, key component of the F(0) channel; it plays a direct role in translocation across the membrane. A homomeric c-ring of between 10-14 subunits forms the central stalk rotor element with the F(1) delta and epsilon subunits. The sequence is that of ATP synthase subunit c from Pediococcus pentosaceus (strain ATCC 25745 / CCUG 21536 / LMG 10740 / 183-1w).